The following is a 231-amino-acid chain: Ribonuclease 3 (231 aa).

The RNase III domain maps to 7–135 (IQAIESKLNF…ILGAVYLDGG (129 aa)). Residue Glu-48 coordinates Mg(2+). Asp-52 is a catalytic residue. The Mg(2+) site is built by Asn-121 and Glu-124. Residue Glu-124 is part of the active site. A DRBM domain is found at 160-229 (NPKNRLQQFT…AKQALSTHDN (70 aa)).

This sequence belongs to the ribonuclease III family. As to quaternary structure, homodimer. Mg(2+) serves as cofactor.

Its subcellular location is the cytoplasm. It catalyses the reaction Endonucleolytic cleavage to 5'-phosphomonoester.. Digests double-stranded RNA. Involved in the processing of primary rRNA transcript to yield the immediate precursors to the large and small rRNAs (23S and 16S). Processes some mRNAs, and tRNAs when they are encoded in the rRNA operon. Processes pre-crRNA and tracrRNA of type II CRISPR loci if present in the organism. The protein is Ribonuclease 3 of Chlamydia trachomatis serovar A (strain ATCC VR-571B / DSM 19440 / HAR-13).